Here is a 515-residue protein sequence, read N- to C-terminus: MDEFHRCGKEDSFWQQCFLYPLFFQEDLYAISHDHYLDVSSSSRPMEHLSSNDQLSFLTVKRLIGQIRQQNHSIVLFVNCDPNPLADRKKSFYSESVLEALTLVLEVPFSIWSKYSVEGMNECKSFRSIHSIFPFLEDKFPHSNSILDARIPYSIHPEILVRTFRRWIRDAPSLHPLRSVLYDYRNSPENLQRSIIVVPRVNTRFFLFLLNYYVCECESILFSRLKRSSHSRSLSHGSFPQRTHFHRKIKHIIIFSRRNSLKSIWSLKDPKIHYVRYGERPIIAIKGAHLLVKKCRYYLLIFRQFYFHLWSEPYRVCSHQLSKNCSSSPGYFLRVRMNPIFVRTKMLDELFIADLITNEMDPIVPIVPIIGLLATEKFCDISGRPISKLSWTSLTDDDILDRFDQIWRNLFHYYSGSFDRDGLYRIKYILSLSCAKTLACKHKSTIRVVRKELGPELFKKSFSKEREFDSLPFSSKAAARSQRERIWHSDIPQINPLANSWQKIQDLKIENLFDQ.

The protein belongs to the intron maturase 2 family. MatK subfamily.

The protein resides in the plastid. It localises to the chloroplast. Its function is as follows. Usually encoded in the trnK tRNA gene intron. Probably assists in splicing its own and other chloroplast group II introns. This Pinus roxburghii (Chir pine) protein is Maturase K.